Here is a 551-residue protein sequence, read N- to C-terminus: Probable metalloreductase AIM14 (551 aa).

Helical transmembrane passes span 25-45 (GIII…VKFI), 67-87 (PTWM…GANI), 100-117 (RYGR…YLIL), 138-155 (KWLS…AIGY), 172-192 (FLNF…IVSI), 199-221 (YYSL…IIFH), and 225-247 (GVTI…LRFY). A Ferric oxidoreductase domain is found at 102–217 (GRIAYCLLPL…NITAWSMVVL (116 aa)). The 123-residue stretch at 247 to 369 (YKSYPVNNLK…GGSGISFGLP (123 aa)) folds into the FAD-binding FR-type domain. Residues 440–492 (QDESHAKVEQTQGEEEVDGLLNQDENGIPLQSMKKESFPKKEEGEDEEKSSKD) form a disordered region. The segment covering 472-492 (MKKESFPKKEEGEDEEKSSKD) has biased composition (basic and acidic residues).

It belongs to the ferric reductase (FRE) family. AIM14 subfamily.

Its subcellular location is the membrane. Probable cell surface metalloreductase. May be involved in iron or copper homeostasis. The polypeptide is Probable metalloreductase AIM14 (AIM14) (Candida tropicalis (strain ATCC MYA-3404 / T1) (Yeast)).